A 502-amino-acid polypeptide reads, in one-letter code: Cysteine protease RavZ (502 aa).

2 short sequence motifs (LIR) span residues 9 to 23 (DKLIVDEFEELGEQE) and 23 to 37 (ESDIDEFDLLEGDEK). A catalytic region region spans residues 49 to 325 (SIYPPETSWE…ESALTEGKTL (277 aa)). Active-site residues include H176 and D197. The alpha-3 helix stretch occupies residues 211-217 (YFKGKYR). C258 is a catalytic residue. The segment at 326 to 431 (PVQLSEFIVA…VLPCVKFDDT (106 aa)) is membrane targeting region. An LIR 3 motif is present at residues 429-443 (DDTIDDFVTIEKDEL).

It is found in the secreted. The protein localises to the host cytoplasmic vesicle membrane. The catalysed reaction is [protein]-C-terminal L-amino acid-glycyl-phosphatidylethanolamide + H2O = a 1,2-diacyl-sn-glycero-3-phosphoethanolamine-N-glycine + [protein]-C-terminal &lt;stereo&gt;L-&lt;/stereo&gt;amino acid. It carries out the reaction [protein]-C-terminal L-amino acid-glycyl-phosphatidylserine + H2O = 1,2-diacyl-sn-glycero-3-phospho-L-serine-N-glycine + [protein]-C-terminal &lt;stereo&gt;L-&lt;/stereo&gt;amino acid. Cysteine protease effector that inhibits host cell autophagy by targeting lipid-conjugated ATG8 family proteins on pre-autophagosomal structures. Specifically hydrolyzes the amide bond between the C-terminal glycine residue and an adjacent aromatic residue in ATG8 proteins conjugated to phosphatidylethanolamine (PE), producing an ATG8 protein that cannot be reconjugated by host ATG7 and ATG3. Mechanistically, Ravz interacts with ATG8 proteins conjugated to PE via its LIR motifs, extracts them from the membrane of autophagosomes and integrates the PE part into its own lipid-binding site. It then removes the lipid component of the ATG8 protein. Also able to mediate delipidation of ATG8 proteins conjugated to phosphatidylserine (PS) during non-canonical autophagy. Inhibits host ubiquitin recruitment to bacteria-containing vacuoles, suggesting that it is able to mediate delipidation of other proteins in addition to ATG8 proteins. It is however not involved in the exclusion of autophagy adapters from bacteria-containing vacuoles decorated with ubiquitin. The sequence is that of Cysteine protease RavZ from Legionella pneumophila subsp. pneumophila (strain Philadelphia 1 / ATCC 33152 / DSM 7513).